The following is a 535-amino-acid chain: Peptide chain release factor 3 (535 aa).

Residues 8 to 277 (KRRRTFAIIS…TLVDLAPPPG (270 aa)) form the tr-type G domain. GTP contacts are provided by residues 17–24 (SHPDAGKT), 85–89 (DTPGH), and 139–142 (NKLD).

Belongs to the TRAFAC class translation factor GTPase superfamily. Classic translation factor GTPase family. PrfC subfamily.

Its subcellular location is the cytoplasm. Functionally, increases the formation of ribosomal termination complexes and stimulates activities of RF-1 and RF-2. It binds guanine nucleotides and has strong preference for UGA stop codons. It may interact directly with the ribosome. The stimulation of RF-1 and RF-2 is significantly reduced by GTP and GDP, but not by GMP. In Nitrosomonas eutropha (strain DSM 101675 / C91 / Nm57), this protein is Peptide chain release factor 3.